The sequence spans 305 residues: Acetaldehyde dehydrogenase (305 aa).

13-16 contacts NAD(+); the sequence is SGNI. Catalysis depends on C128, which acts as the Acyl-thioester intermediate. NAD(+)-binding positions include 159–167 and N278; that span reads SAGPGTRQN.

This sequence belongs to the acetaldehyde dehydrogenase family.

The enzyme catalyses acetaldehyde + NAD(+) + CoA = acetyl-CoA + NADH + H(+). This is Acetaldehyde dehydrogenase from Chloroflexus aurantiacus (strain ATCC 29366 / DSM 635 / J-10-fl).